The following is a 216-amino-acid chain: Probable nicotinate-nucleotide adenylyltransferase (216 aa).

This sequence belongs to the NadD family.

The catalysed reaction is nicotinate beta-D-ribonucleotide + ATP + H(+) = deamido-NAD(+) + diphosphate. It functions in the pathway cofactor biosynthesis; NAD(+) biosynthesis; deamido-NAD(+) from nicotinate D-ribonucleotide: step 1/1. Its function is as follows. Catalyzes the reversible adenylation of nicotinate mononucleotide (NaMN) to nicotinic acid adenine dinucleotide (NaAD). The sequence is that of Probable nicotinate-nucleotide adenylyltransferase from Geobacter sp. (strain M21).